Here is a 523-residue protein sequence, read N- to C-terminus: Ribonuclease Y (523 aa).

Residues 3–23 (VWYAIGSIIFGLLVGVSVYLI) traverse the membrane as a helical segment. The KH domain maps to 213–279 (LVNVINLPND…TKTIEKLVED (67 aa)). One can recognise an HD domain in the interval 339-432 (ALGHSIEVAN…VCAADTLSAA (94 aa)).

It belongs to the RNase Y family.

The protein localises to the cell membrane. Functionally, endoribonuclease that initiates mRNA decay. The sequence is that of Ribonuclease Y from Helicobacter hepaticus (strain ATCC 51449 / 3B1).